The sequence spans 625 residues: Glutamine--fructose-6-phosphate aminotransferase [isomerizing] (625 aa).

The active-site Nucleophile; for GATase activity is the cysteine 2. The Glutamine amidotransferase type-2 domain occupies 2-229 (CGLVGYVGQR…QDQAVVITAD (228 aa)). SIS domains lie at 298–437 (SDQE…ARGT) and 470–615 (LAYR…VDKP). Residue lysine 620 is the For Fru-6P isomerization activity of the active site.

As to quaternary structure, homodimer.

Its subcellular location is the cytoplasm. It catalyses the reaction D-fructose 6-phosphate + L-glutamine = D-glucosamine 6-phosphate + L-glutamate. Functionally, catalyzes the first step in hexosamine metabolism, converting fructose-6P into glucosamine-6P using glutamine as a nitrogen source. This Mycobacterium leprae (strain TN) protein is Glutamine--fructose-6-phosphate aminotransferase [isomerizing].